Reading from the N-terminus, the 565-residue chain is Histone acetyltransferase ESA1 (565 aa).

Residues 1-33 (MAPRTQKSTSGTPGGSGTPGPDEGPQISPGGTY) form a disordered region. The Tudor-knot domain maps to 38 to 117 (VVVGCKAFVQ…DEWVSGTRLI (80 aa)). The disordered stretch occupies residues 173-217 (AQAAKNVQGESGLETPQKRKADSGDTSTAQSIRADSIDADADGED). The MYST-type HAT domain maps to 284–553 (ARVKNLNKIQ…INPQKLHWTA (270 aa)). The segment at 317–342 (LYICEMCLSYFPSPFTLKRHRSKCTL) adopts a C2HC MYST-type zinc-finger fold. Positions 367-388 (RTWCRNLCLLSKCFLDHKTLYY) match the ESA1-RPD3 motif motif. The residue at position 384 (Lys384) is an N6-acetyllysine; by autocatalysis. Residues 425–429 (ACILT) and 434–440 (QRAGYGK) contribute to the acetyl-CoA site. Glu460 (proton donor/acceptor) is an active-site residue. Ser464 contacts acetyl-CoA.

Belongs to the MYST (SAS/MOZ) family. As to quaternary structure, component of the NuA4 histone acetyltransferase complex. Autoacetylation at Lys-384 is required for proper function.

It is found in the nucleus. The protein localises to the chromosome. The catalysed reaction is L-lysyl-[histone] + acetyl-CoA = N(6)-acetyl-L-lysyl-[histone] + CoA + H(+). The enzyme catalyses L-lysyl-[protein] + acetyl-CoA = N(6)-acetyl-L-lysyl-[protein] + CoA + H(+). It catalyses the reaction 2-hydroxyisobutanoyl-CoA + L-lysyl-[protein] = N(6)-(2-hydroxyisobutanoyl)-L-lysyl-[protein] + CoA + H(+). It carries out the reaction (2E)-butenoyl-CoA + L-lysyl-[protein] = N(6)-(2E)-butenoyl-L-lysyl-[protein] + CoA + H(+). Catalytic component of the NuA4 histone acetyltransferase (HAT) complex which is involved in epigenetic transcriptional activation of selected genes principally by acetylation of nucleosomal histones H4, H3, H2B, H2A and H2A variant H2A.Z. Acetylates histone H4 to form H4K5ac, H4K8ac, H4K12ac and H4K16ac, histone H3 to form H3K14ac, and histone H2A to form H2AK4ac and H2AK7ac. The NuA4 complex is involved in the DNA damage response and is required for chromosome segregation. The NuA4 complex plays a direct role in repair of DNA double-strand breaks (DSBs) through homologous recombination. Recruitment to promoters depends on H3K4me. Also acetylates non-histone proteins. In addition to protein acetyltransferase, can use different acyl-CoA substrates, such as 2-hydroxyisobutanoyl-CoA (2-hydroxyisobutyryl-CoA) or (2E)-butenoyl-CoA (crotonyl-CoA), and is able to mediate protein 2-hydroxyisobutyrylation and crotonylation, respectively. The chain is Histone acetyltransferase ESA1 (ESA1) from Mycosarcoma maydis (Corn smut fungus).